The sequence spans 646 residues: Nucleoside triphosphatase I (646 aa).

The Helicase ATP-binding domain maps to 48 to 213 (FIGLKNLNSM…NNLIGLLRPN (166 aa)). Residue 61-68 (WDTGMGKT) participates in ATP binding. Positions 151–154 (DEVH) match the DEXH box motif. Positions 377-540 (YIEACRIILN…KINVVFDLLK (164 aa)) constitute a Helicase C-terminal domain. Positions 466 to 532 (DIIILDMPWN…DIIKDKQSKI (67 aa)) are binding to the cap-specific mRNA (nucleoside-2'-O-)-methyltransferase.

Belongs to the helicase family. NPH I subfamily. In terms of assembly, monomer. Interacts (via C-terminus) with RAP94 (via N-terminus). Interacts with the cap-specific mRNA (nucleoside-2'-O-)-methyltransferase.

The protein resides in the virion. The enzyme catalyses a ribonucleoside 5'-triphosphate + H2O = a ribonucleoside 5'-diphosphate + phosphate + H(+). Functionally, DNA-dependent ATPase required for providing the needed energy to achieve the termination of early transcripts. Acts in concert with the RAP94 subunit of the virion RNA polymerase and the capping enzyme/VTF to catalyze release of UUUUUNU-containing nascent RNA from the elongation complex. NPH-I must bind ssDNA in order to exhibit ATPase activity. In Heliothis armigera entomopoxvirus (HaEPV), this protein is Nucleoside triphosphatase I (NPH1).